Reading from the N-terminus, the 335-residue chain is Glyceraldehyde-3-phosphate dehydrogenase (335 aa).

Residues 11–12, aspartate 33, and lysine 78 each bind NAD(+); that span reads RI. D-glyceraldehyde 3-phosphate contacts are provided by residues 148 to 150, threonine 179, 208 to 209, and arginine 231; these read SST and TG. Asparagine 313 serves as a coordination point for NAD(+).

Belongs to the glyceraldehyde-3-phosphate dehydrogenase family. In terms of assembly, homotetramer.

The protein localises to the cytoplasm. The catalysed reaction is D-glyceraldehyde 3-phosphate + phosphate + NAD(+) = (2R)-3-phospho-glyceroyl phosphate + NADH + H(+). It functions in the pathway carbohydrate degradation; glycolysis; pyruvate from D-glyceraldehyde 3-phosphate: step 1/5. In Pleurotus sajor-caju (Oyster mushroom), this protein is Glyceraldehyde-3-phosphate dehydrogenase (GPD).